The sequence spans 254 residues: tRNA pseudouridine synthase A (254 aa).

D52 (nucleophile) is an active-site residue. Y110 lines the substrate pocket.

It belongs to the tRNA pseudouridine synthase TruA family. In terms of assembly, homodimer.

The enzyme catalyses uridine(38/39/40) in tRNA = pseudouridine(38/39/40) in tRNA. Its function is as follows. Formation of pseudouridine at positions 38, 39 and 40 in the anticodon stem and loop of transfer RNAs. This is tRNA pseudouridine synthase A from Thermodesulfovibrio yellowstonii (strain ATCC 51303 / DSM 11347 / YP87).